A 295-amino-acid polypeptide reads, in one-letter code: Indole-3-glycerol phosphate synthase (295 aa).

Belongs to the TrpC family.

The enzyme catalyses 1-(2-carboxyphenylamino)-1-deoxy-D-ribulose 5-phosphate + H(+) = (1S,2R)-1-C-(indol-3-yl)glycerol 3-phosphate + CO2 + H2O. The protein operates within amino-acid biosynthesis; L-tryptophan biosynthesis; L-tryptophan from chorismate: step 4/5. In Prochlorococcus marinus (strain NATL2A), this protein is Indole-3-glycerol phosphate synthase.